The chain runs to 272 residues: Short-chain dehydrogenase reductase ATA1 (272 aa).

14 to 38 is a binding site for NADP(+); the sequence is IITGGARGIGAATARLFTENGAYVI. Residue Ser143 participates in substrate binding. The active-site Proton acceptor is Tyr156. Position 160 (Lys160) interacts with NADP(+).

It belongs to the short-chain dehydrogenases/reductases (SDR) family. As to expression, expressed specifically in tapetal cells.

In terms of biological role, may play a role in tapetum development. This Arabidopsis thaliana (Mouse-ear cress) protein is Short-chain dehydrogenase reductase ATA1.